We begin with the raw amino-acid sequence, 325 residues long: Lipoyl synthase (325 aa).

[4Fe-4S] cluster is bound by residues C68, C73, C79, C94, C98, C101, and S308. The 218-residue stretch at 80–297 folds into the Radical SAM core domain; sequence FGGGTATFMI…ARVANELGFT (218 aa).

The protein belongs to the radical SAM superfamily. Lipoyl synthase family. The cofactor is [4Fe-4S] cluster.

The protein localises to the cytoplasm. It carries out the reaction [[Fe-S] cluster scaffold protein carrying a second [4Fe-4S](2+) cluster] + N(6)-octanoyl-L-lysyl-[protein] + 2 oxidized [2Fe-2S]-[ferredoxin] + 2 S-adenosyl-L-methionine + 4 H(+) = [[Fe-S] cluster scaffold protein] + N(6)-[(R)-dihydrolipoyl]-L-lysyl-[protein] + 4 Fe(3+) + 2 hydrogen sulfide + 2 5'-deoxyadenosine + 2 L-methionine + 2 reduced [2Fe-2S]-[ferredoxin]. The protein operates within protein modification; protein lipoylation via endogenous pathway; protein N(6)-(lipoyl)lysine from octanoyl-[acyl-carrier-protein]: step 2/2. Its function is as follows. Catalyzes the radical-mediated insertion of two sulfur atoms into the C-6 and C-8 positions of the octanoyl moiety bound to the lipoyl domains of lipoate-dependent enzymes, thereby converting the octanoylated domains into lipoylated derivatives. The polypeptide is Lipoyl synthase (Alcanivorax borkumensis (strain ATCC 700651 / DSM 11573 / NCIMB 13689 / SK2)).